A 20-amino-acid chain; its full sequence is Superoxide dismutase [Fe] (20 aa).

It belongs to the iron/manganese superoxide dismutase family. In terms of assembly, homodimer. Fe cation serves as cofactor.

Its subcellular location is the periplasm. It carries out the reaction 2 superoxide + 2 H(+) = H2O2 + O2. In terms of biological role, destroys superoxide anion radicals which are normally produced within the cells and which are toxic to biological systems. The polypeptide is Superoxide dismutase [Fe] (sodB) (Photobacterium damsela subsp. piscicida (Pasteurella piscicida)).